A 109-amino-acid polypeptide reads, in one-letter code: Nucleoid-associated protein YbaB (109 aa).

The protein belongs to the YbaB/EbfC family. Homodimer.

The protein localises to the cytoplasm. It localises to the nucleoid. Functionally, binds to DNA and alters its conformation. May be involved in regulation of gene expression, nucleoid organization and DNA protection. This Escherichia coli O8 (strain IAI1) protein is Nucleoid-associated protein YbaB.